Consider the following 354-residue polypeptide: Methylthioribose-1-phosphate isomerase (354 aa).

Substrate is bound by residues 58–60, Arg101, and Gln204; that span reads RGA. Residue Asp245 is the Proton donor of the active site. 255 to 256 is a binding site for substrate; sequence NK.

It belongs to the eIF-2B alpha/beta/delta subunits family. MtnA subfamily.

It carries out the reaction 5-(methylsulfanyl)-alpha-D-ribose 1-phosphate = 5-(methylsulfanyl)-D-ribulose 1-phosphate. The protein operates within amino-acid biosynthesis; L-methionine biosynthesis via salvage pathway; L-methionine from S-methyl-5-thio-alpha-D-ribose 1-phosphate: step 1/6. Its function is as follows. Catalyzes the interconversion of methylthioribose-1-phosphate (MTR-1-P) into methylthioribulose-1-phosphate (MTRu-1-P). The polypeptide is Methylthioribose-1-phosphate isomerase (Xylella fastidiosa (strain M12)).